The sequence spans 150 residues: Small ribosomal subunit protein eS19 (150 aa).

It belongs to the eukaryotic ribosomal protein eS19 family. Part of the 30S ribosomal subunit.

In terms of biological role, may be involved in maturation of the 30S ribosomal subunit. The polypeptide is Small ribosomal subunit protein eS19 (Pyrococcus horikoshii (strain ATCC 700860 / DSM 12428 / JCM 9974 / NBRC 100139 / OT-3)).